The primary structure comprises 480 residues: LETM1 domain-containing protein LETM2, mitochondrial (480 aa).

The transit peptide at 1-25 directs the protein to the mitochondrion; the sequence is MAFYSYNSFLAIFWTRLPGHSVYPS. Over 26–175 the chain is Mitochondrial intermembrane; that stretch reads CSHFPSLAFL…LLRTCADVFR (150 aa). Positions 88 to 118 are disordered; it reads GKPQLEQTGKPKAASPQPTKEAKTETTEEKR. Residues 107–118 are compositionally biased toward basic and acidic residues; that stretch reads KEAKTETTEEKR. The chain crosses the membrane as a helical span at residues 176-196; the sequence is LVPFMVFIIVPFMEFLIPVFL. At 197-480 the chain is on the mitochondrial matrix side; sequence KLFPDMLPST…QNSKADSKGA (284 aa). The Letm1 RBD domain occupies 219–436; that stretch reads KTMAAKLEIA…SAPQLKGTKD (218 aa). A disordered region spans residues 398–444; it reads ELPPNIETPKPNLGIPTPPPPESKENLTDSAPQLKGTKDEEFIQLPP.

It is found in the mitochondrion inner membrane. In Mus musculus (Mouse), this protein is LETM1 domain-containing protein LETM2, mitochondrial (Letm2).